We begin with the raw amino-acid sequence, 144 residues long: Nucleoside diphosphate kinase (144 aa).

ATP is bound by residues lysine 11, phenylalanine 59, arginine 87, threonine 93, arginine 104, and asparagine 114. Histidine 117 functions as the Pros-phosphohistidine intermediate in the catalytic mechanism.

It belongs to the NDK family. Homotetramer. Mg(2+) is required as a cofactor.

The protein localises to the cytoplasm. It carries out the reaction a 2'-deoxyribonucleoside 5'-diphosphate + ATP = a 2'-deoxyribonucleoside 5'-triphosphate + ADP. It catalyses the reaction a ribonucleoside 5'-diphosphate + ATP = a ribonucleoside 5'-triphosphate + ADP. In terms of biological role, major role in the synthesis of nucleoside triphosphates other than ATP. The ATP gamma phosphate is transferred to the NDP beta phosphate via a ping-pong mechanism, using a phosphorylated active-site intermediate. This is Nucleoside diphosphate kinase from Psychromonas ingrahamii (strain DSM 17664 / CCUG 51855 / 37).